We begin with the raw amino-acid sequence, 276 residues long: MDADSLLLSLELASGSGQGLSPDRRASLLTSLMLVKRDYRYDRVLFWGRILGLVADYYIAQGLSEDQLAPRKTLYSLNCTEWSLLPPATEEMVAQSSVVKGRFMGDPSYEYEHTELQKVNEGEKVFEEEIVVQIKEETRLVSVIDQIDKAVAIIPRGALFKTPFGPTHVNRTFEGLSLSEAKKLSSYFHFREPVELKNKTLLEKADLDPSLDFMDSLEHDIPKGSWSIQMERGNALVVLRSLLWPGLTFYHAPRTKNYGYVYVGTGEKNMDLPFML.

The protein belongs to the flagellar radial spoke RSP9 family. Component of the axonemal radial spoke 1 (RS1) and 2 (RS2) complexes, at least composed of spoke head proteins RSPH1, RSPH3, RSPH9 and the cilia-specific component RSPH4A or sperm-specific component RSPH6A, spoke stalk proteins RSPH14, DNAJB13, DYDC1, ROPN1L and NME5, and the RS1 complex-specific anchor protein IQUB. Interacts with IQUB. Interacts with RSPH3B. Interacts with RSPH4A. Interacts with RSPH6A. Interacts with CFAP61. Interacts with LRRC23.

It is found in the cytoplasm. The protein resides in the cytoskeleton. The protein localises to the cilium axoneme. It localises to the flagellum axoneme. Its subcellular location is the cell projection. It is found in the kinocilium. Its function is as follows. Functions as part of axonemal radial spoke complexes that play an important part in the motility of sperm and cilia. Essential for both the radial spoke head assembly and the central pair microtubule stability in ependymal motile cilia. Required for motility of olfactory and neural cilia and for the structural integrity of ciliary axonemes in both 9+0 and 9+2 motile cilia. The polypeptide is Radial spoke head protein 9 homolog (RSPH9) (Homo sapiens (Human)).